A 1157-amino-acid chain; its full sequence is Zinc finger protein 516 (1157 aa).

Positions methionine 1 to arginine 13 are enriched in basic and acidic residues. A disordered region spans residues methionine 1–valine 26. Residues methionine 1–alanine 420 are mediates promoter DNA-binding and activation of transcription. 7 C2H2-type zinc fingers span residues histidine 34–histidine 56, tyrosine 62–histidine 84, valine 162–histidine 185, phenylalanine 188–histidine 211, phenylalanine 236–histidine 258, histidine 264–histidine 286, and glutamate 323–histidine 345. The segment covering serine 449 to aspartate 458 has biased composition (basic and acidic residues). 2 disordered regions span residues serine 449 to serine 503 and serine 523 to glutamate 653. The segment covering alanine 494–serine 503 has biased composition (polar residues). The C2H2-type 8 zinc-finger motif lies at serine 504–histidine 526. Basic and acidic residues predominate over residues arginine 531–alanine 541. Residues glutamate 550 to glycine 561 show a composition bias toward polar residues. Residues glutamate 575–valine 585 show a composition bias toward acidic residues. The segment covering glycine 601–aspartate 612 has biased composition (polar residues). Residue lysine 630 forms a Glycyl lysine isopeptide (Lys-Gly) (interchain with G-Cter in SUMO2) linkage. Basic and acidic residues predominate over residues serine 644 to glutamate 653. Lysine 669 participates in a covalent cross-link: Glycyl lysine isopeptide (Lys-Gly) (interchain with G-Cter in SUMO2). Residues histidine 753 to histidine 776 form a C2H2-type 9; atypical zinc finger. Disordered regions lie at residues threonine 831–valine 996 and arginine 1013–glutamine 1040. The span at glycine 914 to valine 928 shows a compositional bias: polar residues. Glycyl lysine isopeptide (Lys-Gly) (interchain with G-Cter in SUMO2) cross-links involve residues lysine 1032 and lysine 1051. Residues phenylalanine 1092–histidine 1114 form a C2H2-type 10 zinc finger. The interval proline 1123 to isoleucine 1157 is disordered.

It belongs to the krueppel C2H2-type zinc-finger protein family. In terms of assembly, interacts with PRDM16; the interaction is direct and may play a role in the transcription of brown adipose tissue-specific genes. Interacts with PWWP2B. Interacts with HDAC1; this interaction is enhanced in the presence of PWWP2B. In terms of tissue distribution, expressed by adipocytes more specifically in brown adipose tissue compared to white adipose tissue (WAT).

The protein resides in the nucleus. Transcriptional regulator that binds to the promoter and activates the transcription of genes promoting brown adipose tissue (BAT) differentiation. Among brown adipose tissue-specific genes, binds the proximal region of the promoter of the UCP1 gene to activate its transcription and thereby regulate thermogenesis. May also play a role in the cellular response to replication stress. This is Zinc finger protein 516 from Mus musculus (Mouse).